The sequence spans 312 residues: DNA-directed RNA polymerase subunit alpha (312 aa).

Positions 1 to 226 (MIEFEKPIIT…EHLNLFTDLT (226 aa)) are alpha N-terminal domain (alpha-NTD). Positions 243-312 (DEKVLDRTIE…DLGLGLKNDK (70 aa)) are alpha C-terminal domain (alpha-CTD).

The protein belongs to the RNA polymerase alpha chain family. As to quaternary structure, homodimer. The RNAP catalytic core consists of 2 alpha, 1 beta, 1 beta' and 1 omega subunit. When a sigma factor is associated with the core the holoenzyme is formed, which can initiate transcription.

It catalyses the reaction RNA(n) + a ribonucleoside 5'-triphosphate = RNA(n+1) + diphosphate. DNA-dependent RNA polymerase catalyzes the transcription of DNA into RNA using the four ribonucleoside triphosphates as substrates. This chain is DNA-directed RNA polymerase subunit alpha, found in Streptococcus agalactiae serotype III (strain NEM316).